Here is a 470-residue protein sequence, read N- to C-terminus: O-acyltransferase pboC (470 aa).

Active-site proton acceptor residues include H149 and D386.

This sequence belongs to the plant acyltransferase family. As to quaternary structure, monomer.

Its pathway is secondary metabolite biosynthesis. In terms of biological role, O-acetyltransferase; part of the gene cluster that mediates the biosynthesis of protubonine B, a hydroxylated and diacetylated cyclo-L-Trp-L-Leu derivative. Within the pathway, pboC catalyzes the acetylation of protubonine D at the hydroxy group to produce protubonine C. The first step of the protubonine B synthesis is performed by the nonribosomal peptide synthetase pboA that catalyzes the formation of cyclo-L-Trp-L-Leu by condensing L-Leu with L-Trp. The flavin-dependent monooxygenase pboD is responsible for hydroxylation at C-3 of the indole ring and subsequent formation of the pyrrolidine ring, leadind to protubonine D. Protubonine D is further diacetylated by two acetyltransferases, pboB and pboC, to form the final product protubonine B via protubonine C. The chain is O-acyltransferase pboC from Aspergillus ustus.